We begin with the raw amino-acid sequence, 309 residues long: Small ribosomal subunit biogenesis GTPase RsgA (309 aa).

Positions 88 to 247 (KNLITRPPVA…IADTPGFNKP (160 aa)) constitute a CP-type G domain. GTP is bound by residues 137-140 (TKRD) and 189-197 (GPSGVGKSS). Zn(2+) is bound by residues cysteine 272, cysteine 277, histidine 279, and cysteine 285.

This sequence belongs to the TRAFAC class YlqF/YawG GTPase family. RsgA subfamily. Monomer. Associates with 30S ribosomal subunit, binds 16S rRNA. Requires Zn(2+) as cofactor.

It is found in the cytoplasm. Its function is as follows. One of several proteins that assist in the late maturation steps of the functional core of the 30S ribosomal subunit. Helps release RbfA from mature subunits. May play a role in the assembly of ribosomal proteins into the subunit. Circularly permuted GTPase that catalyzes slow GTP hydrolysis, GTPase activity is stimulated by the 30S ribosomal subunit. The protein is Small ribosomal subunit biogenesis GTPase RsgA of Prochlorococcus marinus (strain SARG / CCMP1375 / SS120).